The following is a 520-amino-acid chain: Probable cytochrome P450 6v1 (520 aa).

A heme-binding site is contributed by Cys465.

It belongs to the cytochrome P450 family. The cofactor is heme.

The protein resides in the endoplasmic reticulum membrane. The protein localises to the microsome membrane. In terms of biological role, may be involved in the metabolism of insect hormones and in the breakdown of synthetic insecticides. This Drosophila melanogaster (Fruit fly) protein is Probable cytochrome P450 6v1 (Cyp6v1).